Reading from the N-terminus, the 229-residue chain is Urease accessory protein UreF (229 aa).

This sequence belongs to the UreF family. In terms of assembly, ureD, UreF and UreG form a complex that acts as a GTP-hydrolysis-dependent molecular chaperone, activating the urease apoprotein by helping to assemble the nickel containing metallocenter of UreC. The UreE protein probably delivers the nickel.

It localises to the cytoplasm. Functionally, required for maturation of urease via the functional incorporation of the urease nickel metallocenter. This Corynebacterium efficiens (strain DSM 44549 / YS-314 / AJ 12310 / JCM 11189 / NBRC 100395) protein is Urease accessory protein UreF.